The chain runs to 150 residues: Flagellar assembly factor FliW (150 aa).

It belongs to the FliW family. In terms of assembly, interacts with translational regulator CsrA and flagellin(s).

It is found in the cytoplasm. In terms of biological role, acts as an anti-CsrA protein, binds CsrA and prevents it from repressing translation of its target genes, one of which is flagellin. Binds to flagellin and participates in the assembly of the flagellum. In Leptospira borgpetersenii serovar Hardjo-bovis (strain L550), this protein is Flagellar assembly factor FliW.